Consider the following 415-residue polypeptide: Alpha-N-acetylgalactosaminidase (415 aa).

A signal peptide spans 1 to 17; it reads MLQKTVLLLALVAQVLM. Intrachain disulfides connect C38–C80, C42–C49, and C127–C158. Residues 78-79 and K154 each bind substrate; that span reads DD. D156 functions as the Nucleophile in the catalytic mechanism. The N-linked (GlcNAc...) asparagine glycan is linked to N177. C187 and C209 form a disulfide bridge. S188 is a substrate binding site. An N-linked (GlcNAc...) asparagine glycan is attached at N201. The substrate site is built by R213 and D217. D217 acts as the Proton donor in catalysis. 2 positions are modified to phosphoserine: S322 and S332. N-linked (GlcNAc...) asparagine glycosylation is present at N385.

The protein belongs to the glycosyl hydrolase 27 family. Homodimer.

It localises to the lysosome. It catalyses the reaction Cleavage of non-reducing alpha-(1-&gt;3)-N-acetylgalactosamine residues from human blood group A and AB mucin glycoproteins, Forssman hapten and blood group A lacto series glycolipids.. The enzyme catalyses a neolactoside IV(3)-alpha-GalNAc,IV(2)-alpha-Fuc-nLc4Cer(d18:1(4E)) + H2O = a neolactoside IV(2)-alpha-Fuc-nLc4Cer(d18:1(4E)) + N-acetyl-alpha-D-galactosamine. It carries out the reaction a neolactoside IV(3)-alpha-GalNAc,IV(2)-alpha-Fuc-nLc4Cer(d18:0) + H2O = a neolactoside IV(2)-alpha-Fuc-nLc4Cer(d18:0) + N-acetyl-alpha-D-galactosamine. The catalysed reaction is a globoside IV3GalNAc-Gb4Cer + H2O = N-acetyl-alpha-D-galactosamine + a globoside Gb4Cer. Functionally, removes terminal alpha-N-acetylgalactosamine residues from glycolipids and glycopeptides. Required for the breakdown of glycolipids. The polypeptide is Alpha-N-acetylgalactosaminidase (Naga) (Mus musculus (Mouse)).